A 142-amino-acid polypeptide reads, in one-letter code: Cell wall-binding protein YqgA (142 aa).

An N-terminal signal peptide occupies residues 1–28 (MKQGKFSVFLILLLMLTLVVAPKEKAEA).

As to quaternary structure, found in a complex with F(1)F(0) ATP synthase and SpoIIIJ and YqjG.

The protein localises to the secreted. The protein resides in the cell wall. This is Cell wall-binding protein YqgA (yqgA) from Bacillus subtilis (strain 168).